A 498-amino-acid polypeptide reads, in one-letter code: MARIIETSTGLDALTFDDVLLQPGHSEVMPGQTNIATRIAQDIELNVPILSAAMDTVTESRLAIAMAQAGGMGVIHRNLTPVQQAEEVRQVKKFESGMVVNPVTIGPDATLAEALSLDEGPRHFRASPVVEKSHRLVGILTNRDVRFASDPEQKIYELMTRENLVTVKDGVQQHEAKRLLHTHRIEKXLVVDADSRFVGLITVKDIEKSQLNPHASKDAQGRLRAAAAISVGDDGYERAERLIDAGVDLLVVDTAHGHSQRVLDAVTRVKKLSNSVRIMAGNVATYDGTRALIDAGADAVKVGIGPGSICTTRIVAGVGVPQLAAIMSAVQAAQDQNIPIIADGGIKFSGDLAKAIAAGASAAMIGSLLAGTDESPGEVYLYQGRSFKAYRGMGSVGAMARGSADRYFQAEVRDTLKLVPEGIEGXVPYKGPVSGVLHQLAGGLKAAMGYVGGADLKDFQERATFVRISGAGLRESHAHDVTITPRKARIIPAQAADR.

CBS domains lie at 98–155 (MVVN…EQKI) and 159–216 (MTRE…PHAS). Residues Asp253 and 303–305 (GIG) contribute to the NAD(+) site. 2 residues coordinate K(+): Gly305 and Gly307. IMP is bound at residue Ser308. Residue Cys310 participates in K(+) binding. The Thioimidate intermediate role is filled by Cys310. Residues 343 to 345 (DGG), 366 to 367 (GS), and 390 to 394 (YRGMG) contribute to the IMP site. The active-site Proton acceptor is the Arg406. Glu421 provides a ligand contact to IMP. Glu475, Ser476, and His477 together coordinate K(+).

It belongs to the IMPDH/GMPR family. In terms of assembly, homotetramer. K(+) is required as a cofactor.

The enzyme catalyses IMP + NAD(+) + H2O = XMP + NADH + H(+). It participates in purine metabolism; XMP biosynthesis via de novo pathway; XMP from IMP: step 1/1. With respect to regulation, mycophenolic acid (MPA) is a non-competitive inhibitor that prevents formation of the closed enzyme conformation by binding to the same site as the amobile flap. In contrast, mizoribine monophosphate (MZP) is a competitive inhibitor that induces the closed conformation. MPA is a potent inhibitor of mammalian IMPDHs but a poor inhibitor of the bacterial enzymes. MZP is a more potent inhibitor of bacterial IMPDH. Catalyzes the conversion of inosine 5'-phosphate (IMP) to xanthosine 5'-phosphate (XMP), the first committed and rate-limiting step in the de novo synthesis of guanine nucleotides, and therefore plays an important role in the regulation of cell growth. This Rhizobium tropici protein is Inosine-5'-monophosphate dehydrogenase.